The chain runs to 129 residues: Large ribosomal subunit protein uL22 (129 aa).

Belongs to the universal ribosomal protein uL22 family. In terms of assembly, part of the 50S ribosomal subunit.

Functionally, this protein binds specifically to 23S rRNA; its binding is stimulated by other ribosomal proteins, e.g. L4, L17, and L20. It is important during the early stages of 50S assembly. It makes multiple contacts with different domains of the 23S rRNA in the assembled 50S subunit and ribosome. Its function is as follows. The globular domain of the protein is located near the polypeptide exit tunnel on the outside of the subunit, while an extended beta-hairpin is found that lines the wall of the exit tunnel in the center of the 70S ribosome. This Prochlorococcus marinus (strain MIT 9211) protein is Large ribosomal subunit protein uL22.